We begin with the raw amino-acid sequence, 585 residues long: uncharacterized protein (585 aa).

6 helical membrane-spanning segments follow: residues 18-38 (FMWS…YPII), 55-75 (AAWV…ATFF), 128-148 (FFLS…AISL), 150-170 (VMFY…PFLA), 238-258 (IWSA…VALL), and 276-296 (VAFF…GFVI). Residues 18 to 301 (FMWSLLAMLL…LGFVINMFSQ (284 aa)) form the ABC transmembrane type-1 domain. One can recognise an ABC transporter domain in the interval 335 to 570 (VHFKNVSLAY…GGYYKKIYDL (236 aa)). 369-376 (GPTGSGKS) contributes to the ATP binding site.

It belongs to the ABC transporter superfamily.

It is found in the cell membrane. This is an uncharacterized protein from Bacillus subtilis (strain 168).